The chain runs to 293 residues: Ribosomal protein L11 methyltransferase (293 aa).

S-adenosyl-L-methionine contacts are provided by Thr145, Gly166, Asp188, and Asn230.

This sequence belongs to the methyltransferase superfamily. PrmA family.

The protein resides in the cytoplasm. The catalysed reaction is L-lysyl-[protein] + 3 S-adenosyl-L-methionine = N(6),N(6),N(6)-trimethyl-L-lysyl-[protein] + 3 S-adenosyl-L-homocysteine + 3 H(+). Functionally, methylates ribosomal protein L11. The polypeptide is Ribosomal protein L11 methyltransferase (Edwardsiella ictaluri (strain 93-146)).